Consider the following 1049-residue polypeptide: Dyslexia-associated protein KIAA0319-like protein (1049 aa).

The Cytoplasmic portion of the chain corresponds to 1 to 29; the sequence is MEKRLGVKPNPASWILSGYYWQTSAKWLR. A helical transmembrane segment spans residues 30-50; the sequence is SLYLFYTCFCFSVLWLSTDAS. Residues 49-127 form the MANSC domain; that stretch reads ASESRCQQGK…AFRTHSSNSM (79 aa). At 51-932 the chain is on the extracellular side; that stretch reads ESRCQQGKTQ…DSNCEWSVLY (882 aa). Asn-247, Asn-395, Asn-472, Asn-487, and Asn-525 each carry an N-linked (GlcNAc...) asparagine glycan. PKD domains are found at residues 312-401, 409-498, 504-594, 600-688, and 694-785; these read SAGE…VKPE, IAIV…VNKA, VANA…VQPE, QADA…VKEE, and IAKI…VKPD. The chain crosses the membrane as a helical span at residues 933–953; it reads VIIATFVIVVALGILSWTVIC. Residues 954–1049 are Cytoplasmic-facing; sequence CCKRQKGKPK…KARSPREEIL (96 aa). Thr-974 carries the post-translational modification Phosphothreonine. A phosphoserine mark is found at Ser-978, Ser-1009, and Ser-1031. The segment at 1022-1049 is disordered; that stretch reads GKLLHGQNGSVPNGQTPLKARSPREEIL. The segment covering 1028–1037 has biased composition (polar residues); that stretch reads QNGSVPNGQT. Thr-1037 carries the phosphothreonine modification.

As to quaternary structure, interacts with RTN4R. (Microbial infection) Interacts with AAV-2 VP1. Post-translationally, N-glycosylated. Expressed in cortical neurons in the brain cortex (at protein level).

It is found in the cytoplasmic granule membrane. Its subcellular location is the golgi apparatus membrane. The protein resides in the golgi apparatus. The protein localises to the trans-Golgi network membrane. It localises to the cell membrane. Functionally, possible role in axon guidance through interaction with RTN4R. (Microbial infection) Acts as a receptor for adeno-associated virus and is involved in adeno-associated virus infection through endocytosis system. The polypeptide is Dyslexia-associated protein KIAA0319-like protein (Homo sapiens (Human)).